We begin with the raw amino-acid sequence, 132 residues long: Glycine cleavage system H protein (132 aa).

The 84-residue stretch at 24-107 folds into the Lipoyl-binding domain; it reads TATIGLSAFA…GEEGWLIKVR (84 aa). Residue Lys65 is modified to N6-lipoyllysine.

This sequence belongs to the GcvH family. As to quaternary structure, the glycine cleavage system is composed of four proteins: P, T, L and H. (R)-lipoate serves as cofactor.

Its function is as follows. The glycine cleavage system catalyzes the degradation of glycine. The H protein shuttles the methylamine group of glycine from the P protein to the T protein. In Synechocystis sp. (strain ATCC 27184 / PCC 6803 / Kazusa), this protein is Glycine cleavage system H protein.